A 508-amino-acid polypeptide reads, in one-letter code: Aldehyde dehydrogenase family 7 member A1 (508 aa).

Residue 244–249 participates in NAD(+) binding; that stretch reads GSSKVG. Catalysis depends on Glu266, which acts as the Proton acceptor. Catalysis depends on Cys300, which acts as the Nucleophile.

This sequence belongs to the aldehyde dehydrogenase family. In terms of assembly, homotetramer.

The catalysed reaction is an aldehyde + NAD(+) + H2O = a carboxylate + NADH + 2 H(+). In terms of biological role, may play a role in fruit development. In Malus domestica (Apple), this protein is Aldehyde dehydrogenase family 7 member A1.